Here is a 319-residue protein sequence, read N- to C-terminus: Cytochrome c biogenesis protein CcsA (319 aa).

7 helical membrane-spanning segments follow: residues 9 to 29, 44 to 64, 68 to 88, 143 to 163, 223 to 243, 257 to 271, and 286 to 306; these read ILTHISFSTISIVITIHLITL, GMIVTFFSITGFLVSRWASSG, LSNLYESLIFLSWALYILHTI, MLLSYATLLCGSLLSAAILII, VISLGFTLLTIGILCGAVWAN, TWAFITWTIFAIYLH, and VASIGFLIIWICYFGINLLGI.

Belongs to the CcmF/CycK/Ccl1/NrfE/CcsA family. May interact with Ccs1.

It is found in the plastid. The protein localises to the chloroplast thylakoid membrane. Required during biogenesis of c-type cytochromes (cytochrome c6 and cytochrome f) at the step of heme attachment. In Agrostis stolonifera (Creeping bentgrass), this protein is Cytochrome c biogenesis protein CcsA.